A 156-amino-acid polypeptide reads, in one-letter code: MYALDFLFIAFVYFAACHIQEKPVRAQEVQLPPGQECQMTPVIHILKHRGCKPKAIPSFACIGKCTSYVQVSGSKIWQMERTCNCCQEAGEREATVVLYCPDAKNEERRFRKVSTKAPLECMCRPCGSIEESAIIPQEVAGYAEEGPLYNHFRKSF.

An N-terminal signal peptide occupies residues 1–26 (MYALDFLFIAFVYFAACHIQEKPVRA). 5 disulfides stabilise this stretch: cysteine 37/cysteine 86, cysteine 51/cysteine 100, cysteine 61/cysteine 121, cysteine 65/cysteine 123, and cysteine 83/cysteine 126. Residues 37-127 (CQMTPVIHIL…PLECMCRPCG (91 aa)) form the CTCK domain.

Heterodimer of burs and pburs.

The protein resides in the secreted. In terms of biological role, final heterodimeric neurohormone released at the end of the molting cycle, involved in the sclerotization (tanning) of the insect cuticle, melanization and wing spreading. The polypeptide is Bursicon (Manduca sexta (Tobacco hawkmoth)).